Here is a 274-residue protein sequence, read N- to C-terminus: Large ribosomal subunit protein uL2 (274 aa).

Disordered stretches follow at residues 28–53 (APYAPLLEKNSKSGGRNNNGRITVRH) and 223–274 (VAMN…RRNK). Residues 39–48 (KSGGRNNNGR) are compositionally biased toward low complexity.

Belongs to the universal ribosomal protein uL2 family. As to quaternary structure, part of the 50S ribosomal subunit. Forms a bridge to the 30S subunit in the 70S ribosome.

Functionally, one of the primary rRNA binding proteins. Required for association of the 30S and 50S subunits to form the 70S ribosome, for tRNA binding and peptide bond formation. It has been suggested to have peptidyltransferase activity; this is somewhat controversial. Makes several contacts with the 16S rRNA in the 70S ribosome. In Pseudoalteromonas atlantica (strain T6c / ATCC BAA-1087), this protein is Large ribosomal subunit protein uL2.